The sequence spans 62 residues: DNA-binding protein 7 (62 aa).

Belongs to the 7 kDa DNA-binding/endoribonuclease P2 family. In terms of assembly, monomer.

It is found in the cytoplasm. In terms of biological role, can constrain negative DNA supercoils. May be involved in maintaining the integrity of the genome at high temperature. This Metallosphaera sedula (strain ATCC 51363 / DSM 5348 / JCM 9185 / NBRC 15509 / TH2) protein is DNA-binding protein 7.